The primary structure comprises 184 residues: uncharacterized protein (184 aa).

This is an uncharacterized protein from Haemophilus influenzae (strain ATCC 51907 / DSM 11121 / KW20 / Rd).